We begin with the raw amino-acid sequence, 701 residues long: Elongation factor G (701 aa).

The region spanning glutamate 8–valine 286 is the tr-type G domain. GTP-binding positions include alanine 17–threonine 24, aspartate 85–histidine 89, and asparagine 139–aspartate 142.

This sequence belongs to the TRAFAC class translation factor GTPase superfamily. Classic translation factor GTPase family. EF-G/EF-2 subfamily.

The protein localises to the cytoplasm. In terms of biological role, catalyzes the GTP-dependent ribosomal translocation step during translation elongation. During this step, the ribosome changes from the pre-translocational (PRE) to the post-translocational (POST) state as the newly formed A-site-bound peptidyl-tRNA and P-site-bound deacylated tRNA move to the P and E sites, respectively. Catalyzes the coordinated movement of the two tRNA molecules, the mRNA and conformational changes in the ribosome. This chain is Elongation factor G, found in Roseiflexus sp. (strain RS-1).